The following is a 1045-amino-acid chain: E3 ubiquitin-protein ligase Topors (1045 aa).

Residues 1 to 35 form a disordered region; the sequence is MGSQPPLGSPLSREEGEAPPPAPASEGRRRSRRVR. The E3 ubiquitin-protein ligase activity stretch occupies residues 1-195; sequence MGSQPPLGSP…RERNASVYSP (195 aa). Positions 51–374 are required for DNA-binding; sequence ELAASAPARP…MAAFDQHANY (324 aa). Glycyl lysine isopeptide (Lys-Gly) (interchain with G-Cter in SUMO2) cross-links involve residues Lys-73, Lys-76, Lys-83, and Lys-88. Phosphoserine is present on Ser-98. An RING-type zinc finger spans residues 103 to 142; sequence CPICLDRFDNVSYLDRCLHKFCFRCVQEWSKNKAECPLCK. Residue Lys-159 forms a Glycyl lysine isopeptide (Lys-Gly) (interchain with G-Cter in SUMO2) linkage. Residue Ser-194 is modified to Phosphoserine. Lys-249 participates in a covalent cross-link: Glycyl lysine isopeptide (Lys-Gly) (interchain with G-Cter in SUMO2). The tract at residues 437-574 is required for sumoylation and localization to discrete nuclear foci; it reads SLLNTSDSSD…STSLSSPRNL (138 aa). Positions 437-654 are interaction with SUMO1; sequence SLLNTSDSSD…RSRTRDSSWS (218 aa). A disordered region spans residues 442-475; the sequence is SDSSDEELVTGGATSQIQGVQTNDDLNNDSDDSS. The span at 453–463 shows a compositional bias: polar residues; the sequence is GATSQIQGVQT. An interaction with p53/TP53 region spans residues 456 to 731; that stretch reads SQIQGVQTND…RRTLSRAHYS (276 aa). The interval 456–882 is interaction with TOP1; it reads SQIQGVQTND…GKATDTTKHH (427 aa). Ser-499 bears the Phosphoserine mark. The tract at residues 511 to 692 is disordered; that stretch reads ETVKTQEQEQ…RSRNRDRYYL (182 aa). Positions 521 to 534 are enriched in low complexity; the sequence is SYSSGDSDVSRCSS. Basic and acidic residues predominate over residues 539–565; sequence LGKDEQINKGHCDSSTRIKSKKEEKRS. Residue Lys-560 forms a Glycyl lysine isopeptide (Lys-Gly) (interchain with G-Cter in SUMO) linkage. Positions 566 to 578 are enriched in polar residues; it reads TSLSSPRNLNSSV. Ser-585 carries the post-translational modification Phosphoserine. Composition is skewed to basic residues over residues 588–597, 613–630, and 637–647; these read NHRHRKRGRS, KNHR…KRSR, and PRGRRDKKRSR. Low complexity predominate over residues 654–669; the sequence is SRRSQTLSLSSESTSR. Residue Lys-701 forms a Glycyl lysine isopeptide (Lys-Gly) (interchain with G-Cter in SUMO2) linkage. The disordered stretch occupies residues 713–936; the sequence is RDGYESSYRR…DNSGPQDPLQ (224 aa). Ser-718 carries the phosphoserine; by PLK1 modification. The span at 721–730 shows a compositional bias: basic residues; sequence RRRTLSRAHY. The span at 731–747 shows a compositional bias: polar residues; it reads SRQSSSPEFRVQSFSER. A Phosphoserine modification is found at Ser-734. Basic and acidic residues-rich tracts occupy residues 755-766 and 816-825; these read NHSERKYYYYER and FASKAKDSHY. Residues Lys-819 and Lys-837 each participate in a glycyl lysine isopeptide (Lys-Gly) (interchain with G-Cter in SUMO2) cross-link. Residues 854-863 show a composition bias toward basic residues; that stretch reads KHKRRKRKTR. Positions 854 to 917 are interaction with UBE2I; it reads KHKRRKRKTR…ITIDSDSDKD (64 aa). Ser-864 and Ser-866 each carry phosphoserine. The span at 880–897 shows a compositional bias: basic residues; that stretch reads KHHKKKKKKHKKKHKKHH. 3 positions are modified to phosphoserine: Ser-912, Ser-914, and Ser-1028. The span at 913 to 923 shows a compositional bias: basic and acidic residues; that stretch reads DSDKDSEVKED.

In terms of assembly, interacts with PARK7/DJ-1. Interacts with TOP1. Interacts with p53/TP53; can both ubiquitinate and sumoylate p53/TP53. Interacts with the SUMO1 conjugating enzyme UBE2I. Interacts with SUMO1. Interacts with NKX3-1; polyubiquitinates NKX3-1 and induces its proteasomal degradation. Interacts with SIN3A; sumoylates SIN3A. Interacts with IKBKE; induced by DNA damage. Post-translationally, phosphorylation at Ser-98 regulates the E3 ubiquitin-protein ligase activity but not the SUMO1-protein ligase activity. Phosphorylation at Ser-718 increases the E3 ubiquitin-protein ligase activity versus the SUMO1-protein ligase activity resulting in increased p53/TP53 ubiquitination and degradation. In terms of processing, sumoylated. In terms of tissue distribution, expressed at highest levels in testis and at lower levels in adrenal gland, bone marrow, brain, colon, heart, kidney, liver, muscle, ovary, pancreas, placenta, prostate, skeletal muscle, skin, small intestine, spleen, stomach, testis, thymus, thyroid and uterus. Expressed in the alveolar epithelium of the lung. Expression is commonly decreased in colon adenocarcinomas and lung cancers.

The protein resides in the nucleus. The protein localises to the PML body. It catalyses the reaction S-ubiquitinyl-[E2 ubiquitin-conjugating enzyme]-L-cysteine + [acceptor protein]-L-lysine = [E2 ubiquitin-conjugating enzyme]-L-cysteine + N(6)-ubiquitinyl-[acceptor protein]-L-lysine.. Functions as an E3 ubiquitin-protein ligase and as an E3 SUMO1-protein ligase. Probable tumor suppressor involved in cell growth, cell proliferation and apoptosis that regulates p53/TP53 stability through ubiquitin-dependent degradation. May regulate chromatin modification through sumoylation of several chromatin modification-associated proteins. May be involved in DNA damage-induced cell death through IKBKE sumoylation. The sequence is that of E3 ubiquitin-protein ligase Topors (TOPORS) from Homo sapiens (Human).